Consider the following 276-residue polypeptide: MALKKVLTIAGSDTSAGAGMQADLKTFQELDTYGMVALTAIVTMDKDTWSHDVTPLPMDVFEKQLETALSIGPDAIKTGMLGTEEIIKRAGEVYEASNAQYFVVDPVMVCKGEDEVLNPGNTEAMIKYLLPKATVVTPNLFEAGQLSGLGKLNSIEDMKKAATIIFDKGAQHVIIKGGKALDQDKSYDLYYDGQTFYQLTTDMFQQSYNHGAGCTFAAATTAYLANGKSPKEAVISAKAFVASAIKNGWKMNDFVGPVDHGAYNRIEHIDVEVTEV.

Residue asparagine 139 participates in ATP binding. Glutamate 142 contributes to the Mg(2+) binding site. Residues 176–180, aspartate 188, glycine 213, and lysine 238 contribute to the ATP site; that span reads KGGKA.

This sequence belongs to the ThiD family.

It carries out the reaction pyridoxal + ATP = pyridoxal 5'-phosphate + ADP + H(+). In terms of biological role, phosphorylates B6 vitamers; functions in a salvage pathway. Uses pyridoxal, pyridoxine, and pyridoxamine as substrates. The protein is Putative pyridoxine kinase (pdxK) of Staphylococcus aureus (strain COL).